Here is a 251-residue protein sequence, read N- to C-terminus: UDP-Glc:alpha-D-GlcNAc-diphosphoundecaprenol beta-1,3-glucosyltransferase WfaP (251 aa).

This sequence belongs to the glycosyltransferase 2 family. Mn(2+) serves as cofactor. The cofactor is Mg(2+).

The protein localises to the cell inner membrane. It carries out the reaction N-acetyl-alpha-D-glucosaminyl-di-trans,octa-cis-undecaprenyl diphosphate + UDP-alpha-D-glucose = beta-D-Glc-(1-&gt;3)-alpha-D-GlcNAc-di-trans,octa-cis-undecaprenyl diphosphate + UDP + H(+). It participates in bacterial outer membrane biogenesis; lipopolysaccharide biosynthesis. In terms of biological role, catalyzes the addition of Glc, the second sugar moiety of the O56-antigen repeating unit, to GlcNAc-pyrophosphate-undecaprenol. The sequence is that of UDP-Glc:alpha-D-GlcNAc-diphosphoundecaprenol beta-1,3-glucosyltransferase WfaP (wfaP) from Escherichia coli.